A 92-amino-acid polypeptide reads, in one-letter code: Cell division protein FtsB (92 aa).

Residues 1-3 (MRL) are Cytoplasmic-facing. The chain crosses the membrane as a helical span at residues 4 to 21 (LILILLSVLVLFQYNFWF). Topologically, residues 22–92 (GSNGFLDYRQ…VFYHIVKESK (71 aa)) are periplasmic. Residues 28-63 (DYRQNAEKIKENQAENEKLSQRNQRINAEIQGLTKG) adopt a coiled-coil conformation.

The protein belongs to the FtsB family. As to quaternary structure, part of a complex composed of FtsB, FtsL and FtsQ.

The protein localises to the cell inner membrane. Functionally, essential cell division protein. May link together the upstream cell division proteins, which are predominantly cytoplasmic, with the downstream cell division proteins, which are predominantly periplasmic. The chain is Cell division protein FtsB from Haemophilus influenzae (strain 86-028NP).